The primary structure comprises 332 residues: uncharacterized protein (332 aa).

Composition is skewed to acidic residues over residues 290–314 and 323–332; these read EDID…DSFG and EDSEDSDNSE. The disordered stretch occupies residues 290-332; sequence EDIDDIDDSDESDDSDDSEDSDSFGDSDSSGNSEDSEDSDNSE.

It belongs to the mimivirus L17x/L18x family.

This is an uncharacterized protein from Acanthamoeba polyphaga mimivirus (APMV).